The sequence spans 202 residues: Dephospho-CoA kinase (202 aa).

A DPCK domain is found at 4-202; that stretch reads VIGLTGGIAT…TDKGFINKER (199 aa). ATP is bound at residue 12 to 17; sequence ATGKST.

This sequence belongs to the CoaE family.

It localises to the cytoplasm. It catalyses the reaction 3'-dephospho-CoA + ATP = ADP + CoA + H(+). The protein operates within cofactor biosynthesis; coenzyme A biosynthesis; CoA from (R)-pantothenate: step 5/5. In terms of biological role, catalyzes the phosphorylation of the 3'-hydroxyl group of dephosphocoenzyme A to form coenzyme A. The sequence is that of Dephospho-CoA kinase from Staphylococcus haemolyticus (strain JCSC1435).